We begin with the raw amino-acid sequence, 256 residues long: Adenylate kinase (256 aa).

Position 45–50 (45–50) interacts with ATP; it reads GAGKGT. Positions 67 to 96 are NMP; that stretch reads ATGDLLRQQVAMGTDLGKQAKKIMDQGALV. AMP is bound by residues T68, R73, 94–96, 123–126, and Q130; these read ALV and GFPR. Positions 164–201 are LID; the sequence is GRLIHPGSGRSYHKIFSPPKQPMKDDITGEPLVQRSDD. ATP is bound by residues R165 and 174–175; that span reads SY. 2 residues coordinate AMP: R198 and R209. ATP is bound at residue Q237.

It belongs to the adenylate kinase family. AK2 subfamily. In terms of assembly, monomer.

It is found in the cytoplasm. The protein resides in the cytosol. It localises to the mitochondrion intermembrane space. It carries out the reaction AMP + ATP = 2 ADP. In terms of biological role, catalyzes the reversible transfer of the terminal phosphate group between ATP and AMP. Plays an important role in cellular energy homeostasis and in adenine nucleotide metabolism. Adenylate kinase activity is critical for regulation of the phosphate utilization and the AMP de novo biosynthesis pathways. This is Adenylate kinase from Malassezia globosa (strain ATCC MYA-4612 / CBS 7966) (Dandruff-associated fungus).